A 318-amino-acid chain; its full sequence is Protein FdhE homolog (318 aa).

It belongs to the FdhE family.

It localises to the cytoplasm. Its function is as follows. Necessary for formate dehydrogenase activity. The chain is Protein FdhE homolog from Pseudomonas putida (strain ATCC 47054 / DSM 6125 / CFBP 8728 / NCIMB 11950 / KT2440).